The sequence spans 631 residues: Chaperone protein DnaK (631 aa).

The residue at position 197 (threonine 197) is a Phosphothreonine; by autocatalysis. Residues 598 to 631 (MYKKEQGQTGGTEQGGTEQKKSGGDDDVIDAEVE) are disordered. Positions 622-631 (DDDVIDAEVE) are enriched in acidic residues.

Belongs to the heat shock protein 70 family.

In terms of biological role, acts as a chaperone. This is Chaperone protein DnaK from Nitratiruptor sp. (strain SB155-2).